The sequence spans 330 residues: Putative heme-binding peroxidase (330 aa).

Histidine 38 acts as the Proton acceptor in catalysis. Histidine 162 lines the heme b pocket. The Tryptophan radical intermediate role is filled by tryptophan 178. A disordered region spans residues 286 to 330; that stretch reads GEYKSAPQKSPVPGAPGAGKDGEANPLARQNERAHGQAQHALAKL.

It belongs to the peroxidase family. Cytochrome c peroxidase subfamily. Heme b serves as cofactor.

In terms of biological role, destroys radicals which are normally produced within the cells and which are toxic to biological systems. This Mycosarcoma maydis (Corn smut fungus) protein is Putative heme-binding peroxidase (CCP2).